Here is a 299-residue protein sequence, read N- to C-terminus: Ribosomal protein L11 methyltransferase (299 aa).

S-adenosyl-L-methionine-binding residues include Thr-139, Gly-166, Asp-188, and Asn-231.

This sequence belongs to the methyltransferase superfamily. PrmA family.

The protein resides in the cytoplasm. It carries out the reaction L-lysyl-[protein] + 3 S-adenosyl-L-methionine = N(6),N(6),N(6)-trimethyl-L-lysyl-[protein] + 3 S-adenosyl-L-homocysteine + 3 H(+). In terms of biological role, methylates ribosomal protein L11. The chain is Ribosomal protein L11 methyltransferase from Thermosynechococcus vestitus (strain NIES-2133 / IAM M-273 / BP-1).